The chain runs to 149 residues: Ribosome maturation factor RimP (149 aa).

It belongs to the RimP family.

The protein resides in the cytoplasm. In terms of biological role, required for maturation of 30S ribosomal subunits. The polypeptide is Ribosome maturation factor RimP (Clostridium acetobutylicum (strain ATCC 824 / DSM 792 / JCM 1419 / IAM 19013 / LMG 5710 / NBRC 13948 / NRRL B-527 / VKM B-1787 / 2291 / W)).